The following is a 100-amino-acid chain: Urease subunit gamma (100 aa).

It belongs to the urease gamma subunit family. In terms of assembly, heterotrimer of UreA (gamma), UreB (beta) and UreC (alpha) subunits. Three heterotrimers associate to form the active enzyme.

The protein localises to the cytoplasm. It carries out the reaction urea + 2 H2O + H(+) = hydrogencarbonate + 2 NH4(+). Its pathway is nitrogen metabolism; urea degradation; CO(2) and NH(3) from urea (urease route): step 1/1. This Acinetobacter baumannii (strain AB307-0294) protein is Urease subunit gamma.